The primary structure comprises 600 residues: Glutamine--fructose-6-phosphate aminotransferase [isomerizing] (600 aa).

The Nucleophile; for GATase activity role is filled by cysteine 2. One can recognise a Glutamine amidotransferase type-2 domain in the interval cysteine 2–asparagine 217. SIS domains are found at residues isoleucine 283 to leucine 422 and leucine 452 to proline 590. The For Fru-6P isomerization activity role is filled by lysine 595.

Homodimer.

It is found in the cytoplasm. The catalysed reaction is D-fructose 6-phosphate + L-glutamine = D-glucosamine 6-phosphate + L-glutamate. Its function is as follows. Catalyzes the first step in hexosamine metabolism, converting fructose-6P into glucosamine-6P using glutamine as a nitrogen source. This chain is Glutamine--fructose-6-phosphate aminotransferase [isomerizing], found in Oceanobacillus iheyensis (strain DSM 14371 / CIP 107618 / JCM 11309 / KCTC 3954 / HTE831).